A 147-amino-acid polypeptide reads, in one-letter code: MASFRLFLLCLAGLVFVSEAGSVGAGEPKCPLMVKVLDAVRGSPAANVGVKVFKKAADETWEPFASGKTSESGELHGLTTEDKFVEGLYKVELDTKSYWKSLGISPFHEFAEVVFTANDSGPRHYTIAALLSPYSYSTTALVSSPKA.

Residues 1–20 (MASFRLFLLCLAGLVFVSEA) form the signal peptide. Cys30 is subject to Sulfocysteine. Lys35 lines the L-thyroxine pocket. Glu62 carries the 4-carboxyglutamate modification. The residue at position 72 (Ser72) is a Phosphoserine. An L-thyroxine-binding site is contributed by Glu74. N-linked (GlcNAc...) asparagine glycosylation occurs at Asn118. Residue Ser137 participates in L-thyroxine binding.

It belongs to the transthyretin family. As to quaternary structure, homotetramer. Dimer of dimers. In the homotetramer, subunits assemble around a central channel that can accommodate two ligand molecules. Interacts with RBP4. Sulfonation of the reactive cysteine Cys-30 enhances the stability of the native conformation of TTR, avoiding misassembly of the protein leading to amyloid formation. As to expression, detected in serum (at protein level).

Its subcellular location is the secreted. Functionally, thyroid hormone-binding protein. Probably transports thyroxine from the bloodstream to the brain. The polypeptide is Transthyretin (TTR) (Bos taurus (Bovine)).